The chain runs to 454 residues: Death-associated protein kinase 3 (454 aa).

Residues 13–275 enclose the Protein kinase domain; the sequence is YEMGEELGSG…IAQSLEHSWI (263 aa). ATP is bound by residues 19-27 and Lys42; that span reads LGSGQFAIV. Residue Ser50 is modified to Phosphoserine; by autocatalysis. Glu94 and Val96 together coordinate pyridone 6. Residue Asp139 is the Proton acceptor of the active site. The segment at 161–204 is activation segment; the sequence is DFGIAHKIEAGNEFKNIFGTPEFVAPEIVNYEPLGLEADMWSIG. Residues Thr180 and Thr225 each carry the phosphothreonine modification. Residue Thr265 is modified to Phosphothreonine; by autocatalysis and ROCK1. Thr299 carries the post-translational modification Phosphothreonine; by autocatalysis, DAPK1 and ROCK1. At Thr306 the chain carries Phosphothreonine; by autocatalysis. Ser309 carries the post-translational modification Phosphoserine; by DAPK1. Phosphoserine; by autocatalysis and DAPK1 is present on Ser311. Residues Ser312, Ser318, and Ser326 each carry the phosphoserine; by DAPK1 modification. Positions 427–441 are leucine-zipper; that stretch reads VASEMRFVQDLVRAL.

It belongs to the protein kinase superfamily. CAMK Ser/Thr protein kinase family. DAP kinase subfamily. In terms of assembly, homooligomer in its kinase-active form (homotrimers and homodimers are reported); monomeric in its kinase-inactive form. Homodimerization is required for activation segment autophosphorylation. Isoform 1 and isoform 2 interact with myosin and PPP1R12A; interaction of isoform 1 with PPP1R12A is inhibited by RhoA dominant negative form. Interacts with NLK, DAXX, STAT3, RHOD (GTP-bound form) and TCP10L. Interacts with PAWR; the interaction is reported conflictingly: according to PubMed:17953487 does not interact with PAWR. Interacts with ULK1; may be a substrate of ULK1. Interacts with LUZP1; the interaction is likely to occur throughout the cell cycle and reduces the LUZP1-mediated suppression of MYL9 phosphorylation. It depends on Mg(2+) as a cofactor. Post-translationally, the phosphorylation status is critical for kinase activity, oligomerization and intracellular localization. Phosphorylation at Thr-180, Thr-225 and Thr-265 is essential for activity. The phosphorylated form is localized in the cytoplasm promoted by phosphorylation at Thr-299; nuclear translocation or retention is maximal when it is not phosphorylated. Phosphorylation increases the trimeric form, and its dephosphorylation favors a kinase-inactive monomeric form. Both isoform 1 and isoform 2 can undergo autophosphorylation. As to expression, widely expressed. Isoform 1 and isoform 2 are expressed in the bladder smooth muscle.

The protein localises to the nucleus. The protein resides in the PML body. Its subcellular location is the cytoplasm. It is found in the cytoskeleton. It localises to the microtubule organizing center. The protein localises to the centrosome. The protein resides in the chromosome. Its subcellular location is the centromere. It is found in the spindle. It localises to the midbody. It catalyses the reaction L-seryl-[protein] + ATP = O-phospho-L-seryl-[protein] + ADP + H(+). The catalysed reaction is L-threonyl-[protein] + ATP = O-phospho-L-threonyl-[protein] + ADP + H(+). A sequential activation is proposed: autophosphorylation at consensus sites is leading to dimerization of the catalytic domain stabilized by phosphorylation at Ser-50 and activation segment exchange (producing an active confirmation of both kinase modules in trans) followed by phosphorylation at Thr-180 in the activation segment and at other regulatory sites. Phosphorylation at Thr-180, Thr-225 and Thr-265 is essential for activity. Oligomerization is required for full enzymatic activity. Inhibited by pyridone-6 (K00225), a potent, ATP-competitive inhibitor. Functionally, serine/threonine kinase which is involved in the regulation of apoptosis, autophagy, transcription, translation and actin cytoskeleton reorganization. Involved in the regulation of smooth muscle contraction. Regulates both type I (caspase-dependent) apoptotic and type II (caspase-independent) autophagic cell deaths signal, depending on the cellular setting. Involved in regulation of starvation-induced autophagy. Regulates myosin phosphorylation in both smooth muscle and non-muscle cells. In smooth muscle, regulates myosin either directly by phosphorylating MYL12B and MYL9 or through inhibition of smooth muscle myosin phosphatase (SMPP1M) via phosphorylation of PPP1R12A; the inhibition of SMPP1M functions to enhance muscle responsiveness to Ca(2+) and promote a contractile state. Phosphorylates MYL12B in non-muscle cells leading to reorganization of actin cytoskeleton. Isoform 2 can phosphorylate myosin, PPP1R12A and MYL12B. Overexpression leads to condensation of actin stress fibers into thick bundles. Involved in actin filament focal adhesion dynamics. The function in both reorganization of actin cytoskeleton and focal adhesion dissolution is modulated by RhoD. Positively regulates canonical Wnt/beta-catenin signaling through interaction with NLK and TCF7L2. Phosphorylates RPL13A on 'Ser-77' upon interferon-gamma activation which is causing RPL13A release from the ribosome, RPL13A association with the GAIT complex and its subsequent involvement in transcript-selective translation inhibition. Enhances transcription from AR-responsive promoters in a hormone- and kinase-dependent manner. Involved in regulation of cell cycle progression and cell proliferation. May be a tumor suppressor. The sequence is that of Death-associated protein kinase 3 (DAPK3) from Homo sapiens (Human).